Here is a 399-residue protein sequence, read N- to C-terminus: N-acetylglucosamine-6-phosphate deacetylase (399 aa).

Residues H65, H67, and E135 each coordinate a divalent metal cation. 146 to 147 is a substrate binding site; that stretch reads AH. Residues H201 and H222 each contribute to the a divalent metal cation site. Residues 225-226, R233, and 254-257 each bind substrate; these read NG and DGHH. Residue D279 participates in a divalent metal cation binding. D279 (proton donor/acceptor) is an active-site residue. 312 to 314 is a substrate binding site; that stretch reads LAG.

This sequence belongs to the metallo-dependent hydrolases superfamily. NagA family. As to quaternary structure, homodimer. A divalent metal cation is required as a cofactor.

It carries out the reaction N-acetyl-D-glucosamine 6-phosphate + H2O = D-glucosamine 6-phosphate + acetate. It participates in amino-sugar metabolism; N-acetylneuraminate degradation; D-fructose 6-phosphate from N-acetylneuraminate: step 4/5. Involved in the first committed step in the biosynthesis of amino-sugar-nucleotides. Catalyzes the hydrolysis of the N-acetyl group of N-acetylglucosamine-6-phosphate (GlcNAc-6-P) to yield glucosamine 6-phosphate and acetate. The chain is N-acetylglucosamine-6-phosphate deacetylase (manD) from Vibrio furnissii.